The primary structure comprises 233 residues: Hydroxyacylglutathione hydrolase (233 aa).

Zn(2+) contacts are provided by histidine 52, histidine 54, aspartate 56, histidine 57, histidine 108, aspartate 125, and histidine 163.

This sequence belongs to the metallo-beta-lactamase superfamily. Glyoxalase II family. Monomer. It depends on Zn(2+) as a cofactor.

The enzyme catalyses an S-(2-hydroxyacyl)glutathione + H2O = a 2-hydroxy carboxylate + glutathione + H(+). It functions in the pathway secondary metabolite metabolism; methylglyoxal degradation; (R)-lactate from methylglyoxal: step 2/2. Functionally, thiolesterase that catalyzes the hydrolysis of S-D-lactoyl-glutathione to form glutathione and D-lactic acid. This Histophilus somni (strain 129Pt) (Haemophilus somnus) protein is Hydroxyacylglutathione hydrolase.